Consider the following 302-residue polypeptide: Sulfate adenylyltransferase subunit 2 (302 aa).

The segment at 280 to 302 is disordered; it reads RQGRLIDSDQSASMEQKKRQGYF.

It belongs to the PAPS reductase family. CysD subfamily. In terms of assembly, heterodimer composed of CysD, the smaller subunit, and CysN.

The enzyme catalyses sulfate + ATP + H(+) = adenosine 5'-phosphosulfate + diphosphate. Its pathway is sulfur metabolism; hydrogen sulfide biosynthesis; sulfite from sulfate: step 1/3. With CysN forms the ATP sulfurylase (ATPS) that catalyzes the adenylation of sulfate producing adenosine 5'-phosphosulfate (APS) and diphosphate, the first enzymatic step in sulfur assimilation pathway. APS synthesis involves the formation of a high-energy phosphoric-sulfuric acid anhydride bond driven by GTP hydrolysis by CysN coupled to ATP hydrolysis by CysD. In Shewanella oneidensis (strain ATCC 700550 / JCM 31522 / CIP 106686 / LMG 19005 / NCIMB 14063 / MR-1), this protein is Sulfate adenylyltransferase subunit 2.